The following is a 331-amino-acid chain: DNA-directed RNA polymerase subunit alpha (331 aa).

The alpha N-terminal domain (alpha-NTD) stretch occupies residues 1–237 (MQSSVTEFLI…NQLESFVYLR (237 aa)). The interval 251–331 (FDPILLRPVD…NWPPDNILDN (81 aa)) is alpha C-terminal domain (alpha-CTD).

This sequence belongs to the RNA polymerase alpha chain family. As to quaternary structure, homodimer. The RNAP catalytic core consists of 2 alpha, 1 beta, 1 beta' and 1 omega subunit. When a sigma factor is associated with the core the holoenzyme is formed, which can initiate transcription.

It catalyses the reaction RNA(n) + a ribonucleoside 5'-triphosphate = RNA(n+1) + diphosphate. DNA-dependent RNA polymerase catalyzes the transcription of DNA into RNA using the four ribonucleoside triphosphates as substrates. This chain is DNA-directed RNA polymerase subunit alpha, found in Buchnera aphidicola subsp. Baizongia pistaciae (strain Bp).